The primary structure comprises 56 residues: UPF0434 protein CBUD_1597.1 (56 aa).

This sequence belongs to the UPF0434 family.

The chain is UPF0434 protein CBUD_1597.1 from Coxiella burnetii (strain Dugway 5J108-111).